Here is a 72-residue protein sequence, read N- to C-terminus: Translation initiation factor IF-1 (72 aa).

The S1-like domain maps to 1 to 72; that stretch reads MAKEELLEFP…TKGRITYRFK (72 aa).

The protein belongs to the IF-1 family. As to quaternary structure, component of the 30S ribosomal translation pre-initiation complex which assembles on the 30S ribosome in the order IF-2 and IF-3, IF-1 and N-formylmethionyl-tRNA(fMet); mRNA recruitment can occur at any time during PIC assembly.

It localises to the cytoplasm. One of the essential components for the initiation of protein synthesis. Stabilizes the binding of IF-2 and IF-3 on the 30S subunit to which N-formylmethionyl-tRNA(fMet) subsequently binds. Helps modulate mRNA selection, yielding the 30S pre-initiation complex (PIC). Upon addition of the 50S ribosomal subunit IF-1, IF-2 and IF-3 are released leaving the mature 70S translation initiation complex. This Maricaulis maris (strain MCS10) (Caulobacter maris) protein is Translation initiation factor IF-1.